The sequence spans 466 residues: Methylenetetrahydrofolate--tRNA-(uracil-5-)-methyltransferase TrmFO (466 aa).

10-15 provides a ligand contact to FAD; that stretch reads GGGLAG.

It belongs to the MnmG family. TrmFO subfamily. Requires FAD as cofactor.

The protein resides in the cytoplasm. It carries out the reaction uridine(54) in tRNA + (6R)-5,10-methylene-5,6,7,8-tetrahydrofolate + NADH + H(+) = 5-methyluridine(54) in tRNA + (6S)-5,6,7,8-tetrahydrofolate + NAD(+). The catalysed reaction is uridine(54) in tRNA + (6R)-5,10-methylene-5,6,7,8-tetrahydrofolate + NADPH + H(+) = 5-methyluridine(54) in tRNA + (6S)-5,6,7,8-tetrahydrofolate + NADP(+). Catalyzes the folate-dependent formation of 5-methyl-uridine at position 54 (M-5-U54) in all tRNAs. This is Methylenetetrahydrofolate--tRNA-(uracil-5-)-methyltransferase TrmFO from Phenylobacterium zucineum (strain HLK1).